The following is a 399-amino-acid chain: Immunoglobulin heavy constant gamma 1 (399 aa).

The tract at residues 1-21 (ASTKGPSVFPLAPSSKSTSGG) is disordered. Residues 1–98 (ASTKGPSVFP…PSNTKVDKKV (98 aa)) form a CH1 region. Residues 1-350 (ASTKGPSVFP…DGELDGLWTT (350 aa)) lie on the Extracellular side of the membrane. 3 consecutive Ig-like domains span residues 6-99 (PSVF…KKVE), 121-220 (PSVF…KTIS), and 229-325 (PQVY…KSLS). The cysteines at positions 27 and 83 are disulfide-linked. A hinge region spans residues 99 to 110 (EPKSCDKTHTCP). Positions 111-223 (PCPAPELLGG…PIEKTISKAK (113 aa)) are CH2. Disulfide bonds link cysteine 144–cysteine 204 and cysteine 250–cysteine 308. N-linked (GlcNAc...) (complex) asparagine glycosylation occurs at asparagine 180. Residues 224 to 330 (GQPREPQVYT…QKSLSLSPEL (107 aa)) are CH3. Residues 351 to 371 (ITIFITLFLLSVCYSATVTFF) form a helical membrane-spanning segment. The Cytoplasmic segment spans residues 372-399 (KVKWIFSSVVDLKQTIIPDYRNMIGQGA).

As to quaternary structure, immunoglobulins are composed of two identical heavy chains and two identical light chains; disulfide-linked. Interacts with FCGR1A; this interaction mediates IgG effector functions on monocytes. Interacts with FCGR2A and FCGR3A. In terms of processing, glycosylation on Asn-180 is required for interaction with Fc receptors and ability to activate the complement pathway. Post-translationally, (Microbial infection) Deglycosylation on Asn-180 by S.pyogenes EndoS or Endos2 endoglucosidases prevents interaction between immunoglobulin-gamma (IgG) and Fc receptors, impairing ability to activate the complement pathway.

The protein localises to the secreted. It is found in the cell membrane. Its function is as follows. Constant region of immunoglobulin heavy chains. Immunoglobulins, also known as antibodies, are membrane-bound or secreted glycoproteins produced by B lymphocytes. In the recognition phase of humoral immunity, the membrane-bound immunoglobulins serve as receptors which, upon binding of a specific antigen, trigger the clonal expansion and differentiation of B lymphocytes into immunoglobulins-secreting plasma cells. Secreted immunoglobulins mediate the effector phase of humoral immunity, which results in the elimination of bound antigens. The antigen binding site is formed by the variable domain of one heavy chain, together with that of its associated light chain. Thus, each immunoglobulin has two antigen binding sites with remarkable affinity for a particular antigen. The variable domains are assembled by a process called V-(D)-J rearrangement and can then be subjected to somatic hypermutations which, after exposure to antigen and selection, allow affinity maturation for a particular antigen. Mediates IgG effector functions on monocytes triggering ADCC of virus-infected cells. The polypeptide is Immunoglobulin heavy constant gamma 1 (Homo sapiens (Human)).